The chain runs to 343 residues: Glyceraldehyde-3-phosphate dehydrogenase (343 aa).

NAD(+) is bound by residues threonine 13–isoleucine 14 and glycine 111. A D-glyceraldehyde 3-phosphate-binding site is contributed by serine 140 to asparagine 142. The active-site Nucleophile is the cysteine 141. Arginine 169 serves as a coordination point for NAD(+). Histidine 195–alanine 196 serves as a coordination point for D-glyceraldehyde 3-phosphate. Glutamine 303 serves as a coordination point for NAD(+).

It belongs to the glyceraldehyde-3-phosphate dehydrogenase family. As to quaternary structure, homotetramer.

The protein localises to the cytoplasm. The enzyme catalyses D-glyceraldehyde 3-phosphate + phosphate + NADP(+) = (2R)-3-phospho-glyceroyl phosphate + NADPH + H(+). It catalyses the reaction D-glyceraldehyde 3-phosphate + phosphate + NAD(+) = (2R)-3-phospho-glyceroyl phosphate + NADH + H(+). It participates in carbohydrate degradation; glycolysis; pyruvate from D-glyceraldehyde 3-phosphate: step 1/5. In Sulfolobus acidocaldarius (strain ATCC 33909 / DSM 639 / JCM 8929 / NBRC 15157 / NCIMB 11770), this protein is Glyceraldehyde-3-phosphate dehydrogenase.